Here is a 74-residue protein sequence, read N- to C-terminus: Putative protein YozX (74 aa).

The polypeptide is Putative protein YozX (yozX) (Bacillus subtilis (strain 168)).